A 143-amino-acid polypeptide reads, in one-letter code: Deoxyuridine 5'-triphosphate nucleotidohydrolase (143 aa).

Substrate is bound by residues 62 to 64, N75, and 79 to 81; these read RSG and TID.

It belongs to the dUTPase family. It depends on Mg(2+) as a cofactor.

The enzyme catalyses dUTP + H2O = dUMP + diphosphate + H(+). It functions in the pathway pyrimidine metabolism; dUMP biosynthesis; dUMP from dCTP (dUTP route): step 2/2. Its function is as follows. This enzyme is involved in nucleotide metabolism: it produces dUMP, the immediate precursor of thymidine nucleotides and it decreases the intracellular concentration of dUTP so that uracil cannot be incorporated into DNA. The sequence is that of Deoxyuridine 5'-triphosphate nucleotidohydrolase from Acaryochloris marina (strain MBIC 11017).